The chain runs to 482 residues: E3 ubiquitin-protein ligase makorin-1 (482 aa).

Residues alanine 26–serine 38 are compositionally biased toward low complexity. The tract at residues alanine 26–glycine 52 is disordered. Gly residues predominate over residues glycine 40–glycine 52. 3 C3H1-type zinc fingers span residues tryptophan 55–serine 82, serine 84–proline 111, and glutamate 208–serine 235. The segment at cysteine 236 to histidine 263 is makorin-type Cys-His. The segment at cysteine 281 to arginine 335 adopts an RING-type zinc-finger fold. The C3H1-type 4 zinc finger occupies alanine 364–proline 393.

Interacts with p53/TP53 and CDKN1A. Interacts with TERT, modulating telomere length homeostasis. In terms of processing, auto-ubiquitinated; which leads to proteasomal degradation. As to expression, ubiquitous.

The catalysed reaction is S-ubiquitinyl-[E2 ubiquitin-conjugating enzyme]-L-cysteine + [acceptor protein]-L-lysine = [E2 ubiquitin-conjugating enzyme]-L-cysteine + N(6)-ubiquitinyl-[acceptor protein]-L-lysine.. It functions in the pathway protein modification; protein ubiquitination. In terms of biological role, E3 ubiquitin ligase catalyzing the covalent attachment of ubiquitin moieties onto substrate proteins. These substrates include FILIP1, p53/TP53, CDKN1A and TERT. Keeps cells alive by suppressing p53/TP53 under normal conditions, but stimulates apoptosis by repressing CDKN1A under stress conditions. Acts as a negative regulator of telomerase. Has negative and positive effects on RNA polymerase II-dependent transcription. This chain is E3 ubiquitin-protein ligase makorin-1 (MKRN1), found in Homo sapiens (Human).